The sequence spans 970 residues: Anaphase-promoting complex subunit 3 (970 aa).

TPR repeat units follow at residues 35–68 (EDNL…TMIK), 74–107 (ALSN…NNNN), 142–175 (NNNS…NSIS), and 185–218 (GSVY…YPFL). Residues 106-149 (NNNNNNNNNNNNNNNNNNNNNNNKDKCNNSNKNNDSNNNSNSNN) form a disordered region. A disordered region spans residues 274-300 (KVNNNNNNNNNNNNNINNNNSSNKNNE). TPR repeat units lie at residues 319-353 (IKPN…TPIN) and 361-394 (TNQQ…TPQT). 3 disordered regions span residues 358-379 (IQQT…PSQQ), 414-525 (PIPM…TTTT), and 556-582 (SSLS…HNKS). Positions 359–379 (QQTNQQQQQQQQQQPQQPSQQ) are enriched in low complexity. Residues 424-443 (SKGSQHPPSSNSQTPYTPST) are compositionally biased toward polar residues. Basic residues predominate over residues 446 to 460 (VHHHQKQQPHQHKKS). The segment covering 500–525 (TSSTSKQQQQQQQTKQQTTTTTTTTT) has biased composition (low complexity). 9 TPR repeats span residues 546–580 (TEEF…HHHN), 636–671 (LELF…QYRT), 672–705 (GWVL…EPYR), 740–773 (PYSW…DPDM), 775–807 (YAYT…DPRH), 808–841 (YNAF…NESS), 843–876 (VLCC…QPKN), 878–910 (FAKF…EPKE), and 911–944 (TPIY…DPKN). Basic residues predominate over residues 570–580 (YQQHHHLHHHN).

Belongs to the APC3/CDC27 family. The APC/C is composed of at least 13 subunits that stay tightly associated throughout the cell cycle: anapc1, anapc2, anapc3, anapc4, anapc5, anapc6, anapc7, anapc8, anapc10, anapc11, cdc20, cdc26 and cdh1.

It localises to the nucleus. Its pathway is protein modification; protein ubiquitination. Component of the anaphase promoting complex/cyclosome (APC/C), a cell cycle-regulated E3 ubiquitin-protein ligase complex that controls progression through mitosis and the G1 phase of the cell cycle. The chain is Anaphase-promoting complex subunit 3 (anapc3) from Dictyostelium discoideum (Social amoeba).